A 291-amino-acid chain; its full sequence is Lys-63-specific deubiquitinase BRCC36 (291 aa).

Ala-2 is subject to N-acetylalanine. Positions 12 to 179 (VHLESDAFLV…YTCFQSIQAQ (168 aa)) constitute an MPN domain. Positions 122, 124, and 135 each coordinate Zn(2+). The short motif at 122 to 135 (HSHPHITVWPSHVD) is the JAMM motif element. Ser-233 carries the phosphoserine modification.

It belongs to the peptidase M67A family. BRCC36 subfamily. As to quaternary structure, component of the ARISC complex, at least composed of UIMC1/RAP80, ABRAXAS1, BRCC3/BRCC36, BABAM2 and BABAM1/NBA1. Component of the BRCA1-A complex, at least composed of BRCA1, BARD1, UIMC1/RAP80, ABRAXAS1, BRCC3/BRCC36, BABAM2 and BABAM1/NBA1. In the BRCA1-A complex, interacts directly with ABRAXAS1 and BABAM2. Component of the BRISC complex, at least composed of ABRAXAS2, BRCC3/BRCC36, BABAM2 and BABAM1/NBA1. Identified in a complex with SHMT2 and the other subunits of the BRISC complex. In the BRISC complex, interacts directly with ABRAXAS2. Identified in a complex with ABRAXAS2 and NUMA1. The BRISC complex interacts with the CSN complex. Component of the BRCA1/BRCA2 containing complex (BRCC), which also contains BRCA1, BRCA2, BARD1, BABAM2 and RAD51. BRCC is a ubiquitin E3 ligase complex that enhances cellular survival following DNA damage. Interacts with BRCA1. Binds polyubiquitin. Interacts with PWWP2B. Interacts with HDAC1; this interaction is enhanced in the presence of PWWP2B. The cofactor is Zn(2+).

It is found in the nucleus. It localises to the cytoplasm. Its subcellular location is the cytoskeleton. The protein resides in the spindle pole. Functionally, metalloprotease that specifically cleaves 'Lys-63'-linked polyubiquitin chains. Does not have activity toward 'Lys-48'-linked polyubiquitin chains. Component of the BRCA1-A complex, a complex that specifically recognizes 'Lys-63'-linked ubiquitinated histones H2A and H2AX at DNA lesions sites, leading to target the BRCA1-BARD1 heterodimer to sites of DNA damage at double-strand breaks (DSBs). In the BRCA1-A complex, it specifically removes 'Lys-63'-linked ubiquitin on histones H2A and H2AX, antagonizing the RNF8-dependent ubiquitination at double-strand breaks (DSBs). Catalytic subunit of the BRISC complex, a multiprotein complex that specifically cleaves 'Lys-63'-linked ubiquitin in various substrates. Mediates the specific 'Lys-63'-specific deubiquitination associated with the COP9 signalosome complex (CSN), via the interaction of the BRISC complex with the CSN complex. The BRISC complex is required for normal mitotic spindle assembly and microtubule attachment to kinetochores via its role in deubiquitinating NUMA1. Plays a role in interferon signaling via its role in the deubiquitination of the interferon receptor IFNAR1; deubiquitination increases IFNAR1 activity by enhancing its stability and cell surface expression. Acts as a regulator of the NLRP3 inflammasome by mediating deubiquitination of NLRP3, leading to NLRP3 inflammasome assembly. Down-regulates the response to bacterial lipopolysaccharide (LPS) via its role in IFNAR1 deubiquitination. Deubiquitinates HDAC1 and PWWP2B leading to their stabilization. This Mus musculus (Mouse) protein is Lys-63-specific deubiquitinase BRCC36 (Brcc3).